Consider the following 439-residue polypeptide: Xylose isomerase (439 aa).

Catalysis depends on residues H103 and D106. Residues E234, E270, H273, D298, D309, D311, and D341 each contribute to the Mg(2+) site.

Belongs to the xylose isomerase family. Homotetramer. Requires Mg(2+) as cofactor.

It is found in the cytoplasm. It catalyses the reaction alpha-D-xylose = alpha-D-xylulofuranose. The sequence is that of Xylose isomerase from Bacteroides fragilis (strain ATCC 25285 / DSM 2151 / CCUG 4856 / JCM 11019 / LMG 10263 / NCTC 9343 / Onslow / VPI 2553 / EN-2).